Consider the following 965-residue polypeptide: MTALIRIRGARTHNLKNLDLDLPRNTLIVITGLSGSGKSSLAFDTIYAEGQRRYVESLSAYARQFLSVMEKPDLDQIEGLSPAISIEQKSTSHNPRSTVGTITEIYDYLRLLYARVGQPRCPDHHYPLEAQTVSQMVDHVLTLDPEQRYMLLAPVVRERKGEHTQVFEQLRAQGFVRVRVDGELYEIDVVPTLTLRQKHTIEAVIDRFRPREDIKQRLAESFETALKLGNGMASVQTLDTTTTTPHLFSSKYSCPVCDYSLPELEPRLFSFNAPMGACPACNGLGVTEFFDPAKVVIHPDLSLSAGAVRGWDRRNAYYFQLIASLAKHYTFDIDASWESLPEEIRHTILFGSGDEQINFIYLTEAGGRTKRKHRFEGIVPNLERRYRETESAAVREELAKYVSTRTCPECGGTRLNRAARNVFVADRTLPELTVLPINDALEFFKTLRLPGWRGEIAIKIVKEIGERLGFLVDVGLDYLTLERKADTLSGGEAQRIRLASQIGAGLVGVMYVLDEPSIGLHQRDNERLLGTLTRLRDLGNTVIVVEHDEDAIRQADHILDIGPGAGVHGGEICAQGSLEQIMAAPRSLTGQYLSGRRRIEIPKQRHPPNATKMLHLRGACGNNLKGVNLDIPEGLFTCITGVSGSGKSTLINDTLFTLAANEINGASHPIAPYASVDGLELFDKVVDIDQSPIGRTPRSNPATYTGMFTPLRELFAQVPEARARGYSPGRFSFNVRGGRCEACEGDGLIKVEMHFLPDVYVPCDVCHGKRYNRETLEIRYKGYNINDVLEMTVEDALKLFEAVPAIARKLETLVDVGLSYLKLGQSATTLSGGEAQRVKLSKELSRRDTGRTLYILDEPTTGLHFYDIEALLAVLHKLRDAGNTVIVIEHNLDVIKTADWVIDLGPEGGGRGGEILVAGTPEAVAAHPHSHTGHFLAKLLPPKDVSNCGHRDPGEEVDIAQTVHR.

32–39 contributes to the ATP binding site; the sequence is GLSGSGKS. Residues 254-281 form a C4-type zinc finger; sequence CPVCDYSLPELEPRLFSFNAPMGACPAC. ABC transporter domains are found at residues 311–588 and 608–937; these read WDRR…PRSL and PNAT…HFLA. 641–648 contributes to the ATP binding site; the sequence is GVSGSGKS. The segment at 740-766 adopts a C4-type zinc-finger fold; sequence CEACEGDGLIKVEMHFLPDVYVPCDVC.

This sequence belongs to the ABC transporter superfamily. UvrA family. As to quaternary structure, forms a heterotetramer with UvrB during the search for lesions.

It localises to the cytoplasm. In terms of biological role, the UvrABC repair system catalyzes the recognition and processing of DNA lesions. UvrA is an ATPase and a DNA-binding protein. A damage recognition complex composed of 2 UvrA and 2 UvrB subunits scans DNA for abnormalities. When the presence of a lesion has been verified by UvrB, the UvrA molecules dissociate. This chain is UvrABC system protein A, found in Xylella fastidiosa (strain 9a5c).